Reading from the N-terminus, the 343-residue chain is Ferrochelatase (343 aa).

His191 and Glu270 together coordinate Fe cation.

This sequence belongs to the ferrochelatase family.

Its subcellular location is the cytoplasm. The catalysed reaction is heme b + 2 H(+) = protoporphyrin IX + Fe(2+). Its pathway is porphyrin-containing compound metabolism; protoheme biosynthesis; protoheme from protoporphyrin-IX: step 1/1. Catalyzes the ferrous insertion into protoporphyrin IX. The protein is Ferrochelatase of Phenylobacterium zucineum (strain HLK1).